The sequence spans 249 residues: Granaticin polyketide synthase putative ketoacyl reductase 2 (249 aa).

12-36 (LVTGSSSGIGQTVAQRLAAEGYRVV) provides a ligand contact to NAD(+). Serine 144 serves as a coordination point for substrate. The Proton acceptor role is filled by tyrosine 157.

The protein belongs to the short-chain dehydrogenases/reductases (SDR) family.

The protein operates within antibiotic biosynthesis; granaticin biosynthesis. The sequence is that of Granaticin polyketide synthase putative ketoacyl reductase 2 (gra-orf6) from Streptomyces violaceoruber.